Here is a 119-residue protein sequence, read N- to C-terminus: Chorion class B protein M2807 (119 aa).

Residues 1–11 (GGLGGGCGRGF) are left arm. Residues 12 to 80 (SGGGLPVATA…GNGAVGITRE (69 aa)) form a central domain region. The segment at 81-119 (GGLGYGAGYGDGYGLGYGGYGGGYGLGYGGYGGCGCGCG) is right arm (Gly-rich tandem repeats).

It belongs to the chorion protein family.

This protein is one of many from the eggshell of the silk moth. The protein is Chorion class B protein M2807 of Bombyx mori (Silk moth).